The chain runs to 577 residues: Urease subunit alpha (577 aa).

The region spanning 136-577 (GAIDCHVHLI…LPMAQRYFLF (442 aa)) is the Urease domain. The Ni(2+) site is built by H141, H143, and K224. N6-carboxylysine is present on K224. Residue H226 coordinates substrate. Residues H253 and H279 each contribute to the Ni(2+) site. H327 serves as the catalytic Proton donor. D367 contacts Ni(2+).

This sequence belongs to the metallo-dependent hydrolases superfamily. Urease alpha subunit family. Heterotrimer of UreA (gamma), UreB (beta) and UreC (alpha) subunits. Three heterotrimers associate to form the active enzyme. The cofactor is Ni cation. In terms of processing, carboxylation allows a single lysine to coordinate two nickel ions.

Its subcellular location is the cytoplasm. The enzyme catalyses urea + 2 H2O + H(+) = hydrogencarbonate + 2 NH4(+). It participates in nitrogen metabolism; urea degradation; CO(2) and NH(3) from urea (urease route): step 1/1. In Mycobacterium ulcerans (strain Agy99), this protein is Urease subunit alpha.